The following is a 192-amino-acid chain: Epididymal-specific lipocalin-12 (192 aa).

The first 19 residues, methionine 1–alanine 19, serve as a signal peptide directing secretion. Cysteine 88 and cysteine 192 form a disulfide bridge.

Belongs to the calycin superfamily. Lipocalin family. In terms of assembly, monomer.

It localises to the secreted. Functionally, binds all-trans retinoic acid and may act as a retinoid carrier protein within the epididymis. May play a role in male fertility. The chain is Epididymal-specific lipocalin-12 (LCN12) from Homo sapiens (Human).